A 282-amino-acid chain; its full sequence is Bifunctional protein FolD (282 aa).

NADP(+)-binding positions include 165–167 (GRS) and Ser190.

Belongs to the tetrahydrofolate dehydrogenase/cyclohydrolase family. In terms of assembly, homodimer.

It catalyses the reaction (6R)-5,10-methylene-5,6,7,8-tetrahydrofolate + NADP(+) = (6R)-5,10-methenyltetrahydrofolate + NADPH. The enzyme catalyses (6R)-5,10-methenyltetrahydrofolate + H2O = (6R)-10-formyltetrahydrofolate + H(+). The protein operates within one-carbon metabolism; tetrahydrofolate interconversion. Its function is as follows. Catalyzes the oxidation of 5,10-methylenetetrahydrofolate to 5,10-methenyltetrahydrofolate and then the hydrolysis of 5,10-methenyltetrahydrofolate to 10-formyltetrahydrofolate. This chain is Bifunctional protein FolD, found in Acinetobacter baumannii (strain ATCC 17978 / DSM 105126 / CIP 53.77 / LMG 1025 / NCDC KC755 / 5377).